We begin with the raw amino-acid sequence, 74 residues long: LLMTGVESGRDAYIAKNYNCVYHCFRDDYCNGLCTENGADSGYCYLAGKYGNACWCINLPDDKPIRIPGKCHRR.

A signal peptide spans 1 to 8; it reads LLMTGVES. In terms of domain architecture, LCN-type CS-alpha/beta spans 10 to 72; sequence RDAYIAKNYN…KPIRIPGKCH (63 aa). 4 disulfide bridges follow: Cys-20/Cys-71, Cys-24/Cys-44, Cys-30/Cys-54, and Cys-34/Cys-56. Positions 73–74 are cleaved as a propeptide — removed by a carboxypeptidase; sequence RR.

Belongs to the long (4 C-C) scorpion toxin superfamily. Sodium channel inhibitor family. Alpha subfamily. Expressed by the venom gland.

Its subcellular location is the secreted. Its function is as follows. Alpha toxins bind voltage-independently at site-3 of sodium channels (Nav) and inhibit the inactivation of the activated channels, thereby blocking neuronal transmission. The protein is Toxin BmKaTx17 of Olivierus martensii (Manchurian scorpion).